Consider the following 602-residue polypeptide: Type 2 DNA topoisomerase 6 subunit B (602 aa).

Residues Asn40, Asp71, 92 to 93 (SR), 102 to 109 (GQQGIGIS), and Lys425 contribute to the ATP site.

The protein belongs to the TOP6B family. In terms of assembly, homodimer. Heterotetramer of two Top6A and two Top6B chains.

The catalysed reaction is ATP-dependent breakage, passage and rejoining of double-stranded DNA.. In terms of biological role, relaxes both positive and negative superturns and exhibits a strong decatenase activity. This Archaeoglobus fulgidus (strain ATCC 49558 / DSM 4304 / JCM 9628 / NBRC 100126 / VC-16) protein is Type 2 DNA topoisomerase 6 subunit B.